The chain runs to 505 residues: Mannosylglucosyl-3-phosphoglycerate synthase (505 aa).

Monomer in solution.

The enzyme catalyses (2R)-2-O-(alpha-D-glucopyranosyl)-3-phospho-glycerate + GDP-alpha-D-mannose = (2R)-2-O-[alpha-D-mannopyranosyl-(1-&gt;2)-alpha-D-glucopyranosyl]-3-phospho-glycerate + GDP + H(+). Not strictly dependent on divalent cations, but the presence of Mn(2+), Ca(2+), Mg(2+) or Co(2+) stimulates activity. Its function is as follows. Involved in the biosynthesis of the compatible solute mannosylglucosylglycerate through a phosphorylating pathway. Catalyzes the conversion of glucosyl-3-phosphoglycerate (GPG) to mannosylglucosyl-3-phosphoglycerate (MGPG). This Petrotoga mobilis (strain DSM 10674 / SJ95) protein is Mannosylglucosyl-3-phosphoglycerate synthase.